Reading from the N-terminus, the 577-residue chain is Alpha-1,2-mannosyltransferase alg9 (577 aa).

The signal sequence occupies residues 1 to 29; that stretch reads MPSKAPRKSLSVSFVWTFSILAVLRLTSA. The Extracellular segment spans residues 30-68; the sequence is SFRVIDDCDEVYNYWEPLHYLLYGYGLQTWEYSPEYAIR. A helical transmembrane segment spans residues 69 to 89; sequence SWFYIALHAVPGFLARGLGLS. Over 90–95 the chain is Cytoplasmic; it reads RLHVFY. A helical membrane pass occupies residues 96–116; that stretch reads FIRGVLACFSAFCETNLILAV. The Extracellular portion of the chain corresponds to 117–136; sequence ARNFNRAVALHLTSVLFVNS. The helical transmembrane segment at 137 to 159 threads the bilayer; that stretch reads GMWSASTSFLPSSFAMNMVTLAL. At 160 to 176 the chain is on the cytoplasmic side; sequence SAQLSPPSTKRTVKVVS. A helical membrane pass occupies residues 177–197; the sequence is FITIGAVIGWPFSAALSIPFI. Topologically, residues 198-217 are extracellular; sequence LLELVDLKGRFRHLFCRWFK. The helical transmembrane segment at 218 to 238 threads the bilayer; sequence AIFVALLITGICITVDSLFYH. Over 239–280 the chain is Cytoplasmic; the sequence is RIQFVAWNIVKYNVLAKDGRGPDIYGTEPWWYYFANLSLQHN. A helical transmembrane segment spans residues 281-301; the sequence is IVLWFAMACGPLVLLAAFTNW. The Extracellular segment spans residues 302–305; sequence INLD. The chain crosses the membrane as a helical span at residues 306 to 326; that stretch reads SFLDLSSVISPFYIWLFIFII. Over 327-333 the chain is Cytoplasmic; sequence QPHKEER. Residues 334–354 form a helical membrane-spanning segment; sequence FMYPIYPVLCLAAAIGLDMSL. The Extracellular segment spans residues 355 to 375; the sequence is KLMIQILSSINETVRSKFPVR. A helical transmembrane segment spans residues 376–396; sequence FVVLCVYAIIGCLSIARILAI. Over 397-577 the chain is Cytoplasmic; that stretch reads QNYNAPMIIY…NLRRASKQQA (181 aa).

Belongs to the glycosyltransferase 22 family.

It is found in the endoplasmic reticulum membrane. The catalysed reaction is an alpha-D-Man-(1-&gt;2)-alpha-D-Man-(1-&gt;2)-alpha-D-Man-(1-&gt;3)-[alpha-D-Man-(1-&gt;3)-alpha-D-Man-(1-&gt;6)]-beta-D-Man-(1-&gt;4)-beta-D-GlcNAc-(1-&gt;4)-alpha-D-GlcNAc-diphospho-di-trans,poly-cis-dolichol + a di-trans,poly-cis-dolichyl beta-D-mannosyl phosphate = an alpha-D-Man-(1-&gt;2)-alpha-D-Man-(1-&gt;2)-alpha-D-Man-(1-&gt;3)-[alpha-D-Man-(1-&gt;2)-alpha-D-Man-(1-&gt;3)-alpha-D-Man-(1-&gt;6)]-beta-D-Man-(1-&gt;4)-beta-D-GlcNAc-(1-&gt;4)-alpha-D-GlcNAc-diphospho-di-trans,poly-cis-dolichol + a di-trans,poly-cis-dolichyl phosphate + H(+). It carries out the reaction an alpha-D-Man-(1-&gt;2)-alpha-D-Man-(1-&gt;2)-alpha-D-Man-(1-&gt;3)-[alpha-D-Man-(1-&gt;2)-alpha-D-Man-(1-&gt;3)-[alpha-D-Man-(1-&gt;6)]-alpha-D-Man-(1-&gt;6)]-beta-D-Man-(1-&gt;4)-beta-D-GlcNAc-(1-&gt;4)-alpha-D-GlcNAc-diphospho-di-trans,poly-cis-dolichol + a di-trans,poly-cis-dolichyl beta-D-mannosyl phosphate = an alpha-D-Man-(1-&gt;2)-alpha-D-Man-(1-&gt;2)-alpha-D-Man-(1-&gt;3)-[alpha-D-Man-(1-&gt;2)-alpha-D-Man-(1-&gt;3)-[alpha-D-Man-(1-&gt;2)-alpha-D-Man-(1-&gt;6)]-alpha-D-Man-(1-&gt;6)]-beta-D-Man-(1-&gt;4)-beta-D-GlcNAc-(1-&gt;4)-alpha-D-GlcNAc-diphospho-di-trans,poly-cis-dolichol + a di-trans,poly-cis-dolichyl phosphate + H(+). It functions in the pathway protein modification; protein glycosylation. Functionally, catalyzes the transfer of mannose from Dol-P-Man to lipid-linked oligosaccharides. This is Alpha-1,2-mannosyltransferase alg9 (alg9) from Schizosaccharomyces pombe (strain 972 / ATCC 24843) (Fission yeast).